A 131-amino-acid polypeptide reads, in one-letter code: Small ribosomal subunit protein uS11 (131 aa).

This sequence belongs to the universal ribosomal protein uS11 family. Part of the 30S ribosomal subunit. Interacts with proteins S7 and S18. Binds to IF-3.

In terms of biological role, located on the platform of the 30S subunit, it bridges several disparate RNA helices of the 16S rRNA. Forms part of the Shine-Dalgarno cleft in the 70S ribosome. The polypeptide is Small ribosomal subunit protein uS11 (Saccharophagus degradans (strain 2-40 / ATCC 43961 / DSM 17024)).